A 563-amino-acid chain; its full sequence is uncharacterized protein (563 aa).

Residues 1–13 are Cytoplasmic-facing; the sequence is MASRSCICQVSAG. A helical membrane pass occupies residues 14-34; it reads IIFLIGAALLVAGLVIVLNVF. The Lumenal segment spans residues 35-528; it reads PNIVNNQIND…LFTPVSTVNT (494 aa). N-linked (GlcNAc...) asparagine glycosylation is found at asparagine 43, asparagine 112, asparagine 133, asparagine 188, asparagine 265, asparagine 295, asparagine 315, and asparagine 502. Residues 529–549 traverse the membrane as a helical segment; it reads ICWIAVGLGAGLIALSIVMVI. The Cytoplasmic portion of the chain corresponds to 550 to 563; the sequence is VSFCCFRDEHHKTS.

It belongs to the CD36 family.

It localises to the membrane. This is an uncharacterized protein from Caenorhabditis elegans.